We begin with the raw amino-acid sequence, 239 residues long: tRNA (guanine-N(7)-)-methyltransferase (239 aa).

S-adenosyl-L-methionine is bound by residues E69, E94, D121, and D144. D144 is an active-site residue. Position 148 (K148) interacts with substrate. Residues 150-155 are interaction with RNA; the sequence is RHNKRR. Residues D180 and 217–220 contribute to the substrate site; that span reads TKFE.

The protein belongs to the class I-like SAM-binding methyltransferase superfamily. TrmB family. In terms of assembly, monomer.

It carries out the reaction guanosine(46) in tRNA + S-adenosyl-L-methionine = N(7)-methylguanosine(46) in tRNA + S-adenosyl-L-homocysteine. Its pathway is tRNA modification; N(7)-methylguanine-tRNA biosynthesis. In terms of biological role, catalyzes the formation of N(7)-methylguanine at position 46 (m7G46) in tRNA. This is tRNA (guanine-N(7)-)-methyltransferase from Serratia proteamaculans (strain 568).